A 113-amino-acid polypeptide reads, in one-letter code: UPF0342 protein MGAS10750_Spy0713 (113 aa).

This sequence belongs to the UPF0342 family.

This is UPF0342 protein MGAS10750_Spy0713 from Streptococcus pyogenes serotype M4 (strain MGAS10750).